A 793-amino-acid polypeptide reads, in one-letter code: E3 UFM1-protein ligase 1 (793 aa).

Residue Ala2 is modified to N-acetylalanine. The tract at residues 2–200 is mediates interaction with DDRGK1; the sequence is ADAWEEIRRL…RGLFSAITRP (199 aa). A required for E3 UFM1-protein ligase activity region spans residues 2–212; sequence ADAWEEIRRL…VNSLVSKYGF (211 aa). Residues 121 to 250 form an involved in CDK5RAP3-binding region; sequence DRLSEEVNDK…KAVFVPDIYS (130 aa). Positions 200–400 are mediates interaction with TRIP4; the sequence is PTAVNSLVSK…NPVHLITEED (201 aa). The segment at 410-473 is disordered; that stretch reads VNTNKKDKKD…SSHAGKKKPD (64 aa). At Arg433 the chain carries Omega-N-methylarginine. Phosphoserine is present on residues Ser458 and Ser462. Positions 490–683 are mediates interaction with CDK5RAP3; that stretch reads IPDAPEEFIS…QLKVTEDPAL (194 aa). At Thr535 the chain carries Phosphothreonine. The tract at residues 742-769 is disordered; the sequence is NKKSGQGEDPSSDDLDKEQHDVTNTTRK. Ser752 and Ser753 each carry phosphoserine. Basic and acidic residues predominate over residues 758-769; the sequence is KEQHDVTNTTRK.

It belongs to the UFL1 family. As to quaternary structure, catalytic component of the UFM1 ribosome E3 ligase (UREL) complex, composed of UFL1, DDRGK1 and CDK5RAP3. Interacts with E2-like enzyme UFC1. Interacts with RELA. Interacts with NBN; promoting recruitment to double-strand breaks following DNA damage. Interacts (when phosphorylated) with YWHAG/14-3-3-gamma; sequestering UFL1 and preventing its association with PDCD1/PD-1 substrate. Ubiquitinated, leading to its degradation by the proteasome. Interaction with CDK5RAP3 protects both proteins against ubiquitination and degradation via the proteasome. Post-translationally, phosphorylated at Ser-462 by ATM, enhancing protein ligase activity and promoting ATM activation in a positive feedback loop. Phosphorylation at Thr-535 by AMPK promotes its interaction with YWHAG/14-3-3-gamma, thereby preventing UFL1 association with PDCD1/PD-1 substrate. Ubiquitously expressed with expression detected in brain, skeletal muscle, lung, heart, gall bladder, liver, small intestine, pancreas, spleen and kidney (at protein level). At 8 weeks after birth, high expression in the Purkinje cell layer of the cerebellum.

It is found in the endoplasmic reticulum membrane. It localises to the cytoplasm. The protein resides in the cytosol. Its subcellular location is the nucleus. The protein localises to the chromosome. E3 protein ligase that mediates ufmylation, the covalent attachment of the ubiquitin-like modifier UFM1 to lysine residues on target proteins, and which plays a key role in various processes, such as ribosome recycling, response to DNA damage, interferon response or reticulophagy (also called ER-phagy). Catalyzes ufmylation of many protein, such as CD274/PD-L1, CDK5RAP3, CYB5R3, DDRGK1, EIF6, histone H4, MRE11, P4HB, PDCD1/PD-1, TRIP4, RPN1, RPS20/uS10, RPL10/uL16, RPL26/uL24, SYVN1/HRD1 and TP53/p53. As part of the UREL complex, plays a key role in ribosome recycling by catalyzing mono-ufmylation of RPL26/uL24 subunit of the 60S ribosome. Ufmylation of RPL26/uL24 occurs on free 60S ribosomes following ribosome dissociation: it weakens the junction between post-termination 60S subunits and SEC61 translocons, promoting release and recycling of the large ribosomal subunit from the endoplasmic reticulum membrane. Ufmylation of RPL26/uL24 and subsequent 60S ribosome recycling either take place after normal termination of translation or after ribosome stalling during cotranslational translocation at the endoplasmic reticulum. Involved in reticulophagy in response to endoplasmic reticulum stress by mediating ufmylation of proteins such as CYB5R3 and RPN1, thereby promoting lysosomal degradation of ufmylated proteins. Ufmylation in response to endoplasmic reticulum stress is essential for processes such as hematopoiesis, blood vessel morphogenesis or inflammatory response. Mediates ufmylation of DDRGK1 and CDK5RAP3; the role of these modifications is however unclear: as both DDRGK1 and CDK5RAP3 act as substrate adapters for ufmylation, it is uncertain whether ufmylation of these proteins is, a collateral effect or is required for ufmylation. Acts as a negative regulator of T-cell activation by mediating ufmylation and stabilization of PDCD1/PD-1. Also involved in the response to DNA damage: recruited to double-strand break sites following DNA damage and mediates monoufmylation of histone H4 and ufmylation of MRE11. Mediates ufmylation of TP53/p53, promoting its stability. Catalyzes ufmylation of TRIP4, thereby playing a role in nuclear receptor-mediated transcription. Required for hematopoietic stem cell function and hematopoiesis. The polypeptide is E3 UFM1-protein ligase 1 (Rattus norvegicus (Rat)).